An 816-amino-acid polypeptide reads, in one-letter code: Sodium/hydrogen exchanger 1 (816 aa).

Residues 1–98 (MLLWSAVRGL…FPVLGIDYTH (98 aa)) lie on the Extracellular side of the membrane. Polar residues predominate over residues 37–50 (LQLSPTDSTTPDSQ). The tract at residues 37 to 79 (LQLSPTDSTTPDSQPSRERSIGDVTTAPPEVTPESRPVNRSVT) is disordered. The N-linked (GlcNAc...) asparagine glycan is linked to N75. The chain crosses the membrane as a helical span at residues 99-121 (VRTPFEISLWILLACLMKIGFHV). Over 122-130 (IPTISSIVP) the chain is Cytoplasmic. A helical membrane pass occupies residues 131-148 (ESCLLIVVGLLVGGLIKG). The Extracellular portion of the chain corresponds to 149 to 158 (VGEKPPFLQS). Residues 159 to 176 (EVFFLFLLPPIILDAGYF) traverse the membrane as a helical segment. The Cytoplasmic portion of the chain corresponds to 177–186 (LPLRQFTENL). A helical transmembrane segment spans residues 187–215 (GTILIFAVVGTLWNAFFLGGLMYAVCLVG). Over 216–222 (GEQINNI) the chain is Extracellular. The helical transmembrane segment at 223-249 (GLLDNLLFGSIISAVDPVAVLAVFEEI) threads the bilayer. Residues 250–252 (HIN) lie on the Cytoplasmic side of the membrane. Residues 253-283 (ELLHILVFGESLLNDAVTVVLYHLFEEFANY) form a helical membrane-spanning segment. The Extracellular segment spans residues 284-287 (DHVG). A helical membrane pass occupies residues 288-322 (IVDIVLGFLSFFVVALGGVFVGVVYGVIAAFTSRF). Residues 323-328 (TAHIRV) are Cytoplasmic-facing. Residues 329–341 (IEPLFVFLYSYMA) traverse the membrane as a helical segment. Topologically, residues 342–350 (YLSAELFHL) are extracellular. The chain crosses the membrane as a helical span at residues 351–371 (SGIMALIASGVVMRPYVEANI). The Cytoplasmic segment spans residues 372–373 (SH). Residues 374 to 404 (KSHTTIKYFLKMWSSVSETLIFIFLGVSTVA) form a helical membrane-spanning segment. At 405–410 (GSHHWN) the chain is on the extracellular side. The helical transmembrane segment at 411–438 (WTFVISTLLFCLIARVLGVLGLTWFINK) threads the bilayer. Residues 439–444 (FRIVKL) are Cytoplasmic-facing. A helical transmembrane segment spans residues 445–469 (TPKDQFIIAYGGLRGAIAFSLGYLL). Residues 470 to 475 (DKKHFP) lie on the Extracellular side of the membrane. The helical transmembrane segment at 476 to 505 (MCDLFLTAIITVIFFTVFVQGMTIRPLVDL) threads the bilayer. An interaction with TESC region spans residues 503–545 (VDLLAVKKKQETKRSINEEIHTQFLDHLLTGIEDICGHYGHHH). The Cytoplasmic portion of the chain corresponds to 506–816 (LAVKKKQETK…EGEPFIPKGQ (311 aa)). Positions 509 to 516 (KKKQETKR) are PI(4,5)P2-binding region. Residues 515-545 (KRSINEEIHTQFLDHLLTGIEDICGHYGHHH) are interaction with CHP2. A confers pH-dependent PI(4,5)P2 binding region spans residues 540–545 (HYGHHH). Residues 552-560 (RFNKKYVKK) form a PI(4,5)P2-binding region region. Phosphoserine occurs at positions 599 and 602. Residue T603 is modified to Phosphothreonine. 2 positions are modified to phosphoserine: S605 and S648. An interaction with TESC region spans residues 633 to 816 (KILRNNLQKT…EGEPFIPKGQ (184 aa)). The segment at 633-816 (KILRNNLQKT…EGEPFIPKGQ (184 aa)) is interaction with CALM1. Positions 684–687 (LTVP) are interaction with PPP3CA. Phosphoserine is present on residues S693, S697, and S703. Residues 715–720 (PVITID) form an interaction with PPP3CA region. A phosphoserine mark is found at S723, S726, S729, S786, S788, and S797. The disordered stretch occupies residues 748–816 (PRVAEEAAEE…EGEPFIPKGQ (69 aa)). Residues 783-792 (PSDSPSSQRM) show a composition bias toward polar residues.

Belongs to the monovalent cation:proton antiporter 1 (CPA1) transporter (TC 2.A.36) family. In terms of assembly, homodimer; dimerization is crucial for its function. Oligomer. Interacts with CALM in a calcium-dependent manner. Interacts with TESC. Interacts (via the juxtamembrane region of the cytoplasmic C-terminal domain) with CHP1; the interaction occurs at the plasma membrane in a calcium-dependent manner. Interacts with CHP2; the interaction occurs in a calcium-dependent manner. Interacts with EZR; regulates the cytoskeletal interactions of SLC9A1 and promotes stress fiber formation. Post-translationally, ubiquitinated, leading to its degradation by the proteasome. Ubiquitination is reduced by CHP1. In terms of processing, O-glycosylated. Palmitoylated; may play a major role in SLC9A1 regulation. Post-translationally, phosphorylation at Ser-648 by AKT1 reduces SLC9A1 binding to CALM1. As to expression, kidney and intestine.

Its subcellular location is the cell membrane. It is found in the basolateral cell membrane. It catalyses the reaction Na(+)(in) + H(+)(out) = Na(+)(out) + H(+)(in). The enzyme catalyses Li(+)(out) + H(+)(in) = Li(+)(in) + H(+)(out). The catalysed reaction is Li(+)(in) + Na(+)(out) = Li(+)(out) + Na(+)(in). Its activity is regulated as follows. Activated at acidic pHs. Inhibited by cariporide and eniporide. Phosphatidylinositol 4,5-bisphosphate (PI(4,5)P2) and phosphatidylinositol 3,4,5-trisphosphate (PI(3,4,5)P3) bind and differentially regulate SLC9A1 activity. Its function is as follows. Electroneutral Na(+) /H(+) antiporter that extrudes Na(+) in exchange for external protons driven by the inward sodium ion chemical gradient, protecting cells from acidification that occurs from metabolism. Exchanges intracellular H(+) ions for extracellular Na(+) in 1:1 stoichiometry. Plays a key role in maintening intracellular pH neutral and cell volume, and thus is important for cell growth, proliferation, migration and survival. In addition, can transport lithium Li(+) and functions also as a Na(+)/Li(+) antiporter. SLC9A1 also functions in membrane anchoring and organization of scaffolding complexes that coordinate signaling inputs. In Oryctolagus cuniculus (Rabbit), this protein is Sodium/hydrogen exchanger 1 (SLC9A1).